A 327-amino-acid chain; its full sequence is Methionyl-tRNA formyltransferase (327 aa).

Residue 117 to 120 (SLLP) participates in (6S)-5,6,7,8-tetrahydrofolate binding.

It belongs to the Fmt family.

The enzyme catalyses L-methionyl-tRNA(fMet) + (6R)-10-formyltetrahydrofolate = N-formyl-L-methionyl-tRNA(fMet) + (6S)-5,6,7,8-tetrahydrofolate + H(+). Its function is as follows. Attaches a formyl group to the free amino group of methionyl-tRNA(fMet). The formyl group appears to play a dual role in the initiator identity of N-formylmethionyl-tRNA by promoting its recognition by IF2 and preventing the misappropriation of this tRNA by the elongation apparatus. The protein is Methionyl-tRNA formyltransferase of Delftia acidovorans (strain DSM 14801 / SPH-1).